The primary structure comprises 478 residues: ATP synthase subunit beta (478 aa).

158 to 165 serves as a coordination point for ATP; it reads GGAGVGKT.

It belongs to the ATPase alpha/beta chains family. In terms of assembly, F-type ATPases have 2 components, CF(1) - the catalytic core - and CF(0) - the membrane proton channel. CF(1) has five subunits: alpha(3), beta(3), gamma(1), delta(1), epsilon(1). CF(0) has three main subunits: a(1), b(2) and c(9-12). The alpha and beta chains form an alternating ring which encloses part of the gamma chain. CF(1) is attached to CF(0) by a central stalk formed by the gamma and epsilon chains, while a peripheral stalk is formed by the delta and b chains.

The protein resides in the cell inner membrane. The enzyme catalyses ATP + H2O + 4 H(+)(in) = ADP + phosphate + 5 H(+)(out). Functionally, produces ATP from ADP in the presence of a proton gradient across the membrane. The catalytic sites are hosted primarily by the beta subunits. In Rhizobium leguminosarum bv. trifolii (strain WSM2304), this protein is ATP synthase subunit beta.